We begin with the raw amino-acid sequence, 20 residues long: Thrombin-like enzyme okinaxobin-2 (20 aa).

A Peptidase S1 domain is found at 1 to 20 (VVGGDECNINEHRFLVALYY).

This sequence belongs to the peptidase S1 family. Snake venom subfamily. As to quaternary structure, monomer. Glycosylated. Expressed by the venom gland.

Its subcellular location is the secreted. Its activity is regulated as follows. Strongly inactivated by diisopropylfluorophosphate (DFP) and to a lesser extent by tosyl-L-lysine chloromethyl ketone (TLCK). Thrombin-like snake venom serine protease. Releases both fibrinopeptides A and B from fibrinogen (FGA and FGB) to form fibrin clots. The chain is Thrombin-like enzyme okinaxobin-2 from Ovophis okinavensis (Ryukyu Island pit viper).